A 392-amino-acid chain; its full sequence is 1-deoxy-D-xylulose 5-phosphate reductoisomerase (392 aa).

NADPH is bound by residues Thr-10, Gly-11, Ser-12, Ile-13, Asn-38, and Asn-124. Lys-125 provides a ligand contact to 1-deoxy-D-xylulose 5-phosphate. NADPH is bound at residue Glu-126. Asp-150 lines the Mn(2+) pocket. 1-deoxy-D-xylulose 5-phosphate is bound by residues Ser-151, Glu-152, Ser-176, and His-199. Residue Glu-152 coordinates Mn(2+). Gly-205 is an NADPH binding site. Residues Ser-212, Asn-217, Lys-218, and Glu-221 each contribute to the 1-deoxy-D-xylulose 5-phosphate site. Glu-221 serves as a coordination point for Mn(2+).

It belongs to the DXR family. It depends on Mg(2+) as a cofactor. Mn(2+) is required as a cofactor.

The enzyme catalyses 2-C-methyl-D-erythritol 4-phosphate + NADP(+) = 1-deoxy-D-xylulose 5-phosphate + NADPH + H(+). Its pathway is isoprenoid biosynthesis; isopentenyl diphosphate biosynthesis via DXP pathway; isopentenyl diphosphate from 1-deoxy-D-xylulose 5-phosphate: step 1/6. In terms of biological role, catalyzes the NADPH-dependent rearrangement and reduction of 1-deoxy-D-xylulose-5-phosphate (DXP) to 2-C-methyl-D-erythritol 4-phosphate (MEP). This Synechococcus sp. (strain JA-2-3B'a(2-13)) (Cyanobacteria bacterium Yellowstone B-Prime) protein is 1-deoxy-D-xylulose 5-phosphate reductoisomerase.